A 194-amino-acid chain; its full sequence is Imidazole glycerol phosphate synthase subunit HisH (194 aa).

The Glutamine amidotransferase type-1 domain maps to 3–194 (RIAIVDLGIG…LILLRNFRRL (192 aa)). The active-site Nucleophile is the Cys-74. Catalysis depends on residues His-176 and Glu-178.

As to quaternary structure, heterodimer of HisH and HisF.

It localises to the cytoplasm. The enzyme catalyses 5-[(5-phospho-1-deoxy-D-ribulos-1-ylimino)methylamino]-1-(5-phospho-beta-D-ribosyl)imidazole-4-carboxamide + L-glutamine = D-erythro-1-(imidazol-4-yl)glycerol 3-phosphate + 5-amino-1-(5-phospho-beta-D-ribosyl)imidazole-4-carboxamide + L-glutamate + H(+). The catalysed reaction is L-glutamine + H2O = L-glutamate + NH4(+). It functions in the pathway amino-acid biosynthesis; L-histidine biosynthesis; L-histidine from 5-phospho-alpha-D-ribose 1-diphosphate: step 5/9. IGPS catalyzes the conversion of PRFAR and glutamine to IGP, AICAR and glutamate. The HisH subunit catalyzes the hydrolysis of glutamine to glutamate and ammonia as part of the synthesis of IGP and AICAR. The resulting ammonia molecule is channeled to the active site of HisF. This Pyrococcus furiosus (strain ATCC 43587 / DSM 3638 / JCM 8422 / Vc1) protein is Imidazole glycerol phosphate synthase subunit HisH.